A 365-amino-acid chain; its full sequence is Peptide chain release factor 2 (365 aa).

Position 251 is an N5-methylglutamine (glutamine 251).

The protein belongs to the prokaryotic/mitochondrial release factor family. Methylated by PrmC. Methylation increases the termination efficiency of RF2.

Its subcellular location is the cytoplasm. Peptide chain release factor 2 directs the termination of translation in response to the peptide chain termination codons UGA and UAA. This is Peptide chain release factor 2 from Campylobacter jejuni subsp. jejuni serotype O:6 (strain 81116 / NCTC 11828).